The following is a 459-amino-acid chain: MSFRFNEAVFGDNSFNERVREKLSTALNSPSKKKLDILKSGIKVQKVDFPTIPQLEILDLDIITQPKSLAKGICKISCKDAMLRIQTVIESNLLLINEQDTPSFTMPQLINNGSFTIPITMTFSSIELEAITNIFVKNPGIGISFNDVDLDFKFDCSVKILQSTIERRLKESMHVVFKDVLPSLIFNTSQNWFTNRGESTSTIPGKREHHHQQTTMSRNVILDGSDFQELSPINMLRLSSIVSSRSTLSLHSTVMNSLSAIPGCLERQNLYRFISRMPSLNNYYSSQSFPQPKSSTVSSKQLVKPFYCSHNLLPKTVLDSSQYDLATITKIQSRLFDRSNSNDDNAKPRRRKIKCKKTRTPSNLQSQGEQAVDDSTAIETVTSTPVQTPIPELEEQSPPYLKTTVSIRDKYVIPEKISLNLDSKKDTSKKKPFYFIGLNSQEPSNNWKWGMEDSPPPYH.

One can recognise an SMP-LTD domain in the interval 1–190 (MSFRFNEAVF…LPSLIFNTSQ (190 aa)). The segment covering 338–347 (RSNSNDDNAK) has biased composition (basic and acidic residues). The tract at residues 338 to 375 (RSNSNDDNAKPRRRKIKCKKTRTPSNLQSQGEQAVDDS) is disordered. Over residues 348 to 359 (PRRRKIKCKKTR) the composition is skewed to basic residues.

The protein belongs to the MDM34 family. Component of the ER-mitochondria encounter structure (ERMES) or MDM complex, composed of MMM1, MDM10, MDM12 and MDM34. Ubiquitinated by a SCF (SKP1-CUL1-F-box protein) E3 ubiquitin-protein ligase complex containing the F-box protein MDM30. Ubiquitination is important for mitochondrial integrity.

The protein resides in the mitochondrion outer membrane. Component of the ERMES/MDM complex, which serves as a molecular tether to connect the endoplasmic reticulum (ER) and mitochondria. Components of this complex are involved in the control of mitochondrial shape and protein biogenesis, and function in nonvesicular lipid trafficking between the ER and mitochondria. MDM34 is required for the interaction of the ER-resident membrane protein MMM1 and the outer mitochondrial membrane-resident beta-barrel protein MDM10. The chain is Mitochondrial distribution and morphology protein 34 from Saccharomyces cerevisiae (strain AWRI1631) (Baker's yeast).